The primary structure comprises 103 residues: Large ribosomal subunit protein uL24 (103 aa).

It belongs to the universal ribosomal protein uL24 family. As to quaternary structure, part of the 50S ribosomal subunit.

Functionally, one of two assembly initiator proteins, it binds directly to the 5'-end of the 23S rRNA, where it nucleates assembly of the 50S subunit. Its function is as follows. One of the proteins that surrounds the polypeptide exit tunnel on the outside of the subunit. In Syntrophomonas wolfei subsp. wolfei (strain DSM 2245B / Goettingen), this protein is Large ribosomal subunit protein uL24.